Here is an 881-residue protein sequence, read N- to C-terminus: Alanine--tRNA ligase (881 aa).

The segment covering 422–440 (FEDEMQKQKERARSARSTE) has biased composition (basic and acidic residues). The disordered stretch occupies residues 422–445 (FEDEMQKQKERARSARSTEKSMGV). Residues His-567, His-571, Cys-669, and His-673 each coordinate Zn(2+).

It belongs to the class-II aminoacyl-tRNA synthetase family. Requires Zn(2+) as cofactor.

It is found in the cytoplasm. The enzyme catalyses tRNA(Ala) + L-alanine + ATP = L-alanyl-tRNA(Ala) + AMP + diphosphate. Its function is as follows. Catalyzes the attachment of alanine to tRNA(Ala) in a two-step reaction: alanine is first activated by ATP to form Ala-AMP and then transferred to the acceptor end of tRNA(Ala). Also edits incorrectly charged Ser-tRNA(Ala) and Gly-tRNA(Ala) via its editing domain. The protein is Alanine--tRNA ligase of Pediococcus pentosaceus (strain ATCC 25745 / CCUG 21536 / LMG 10740 / 183-1w).